The primary structure comprises 273 residues: NH(3)-dependent NAD(+) synthetase (273 aa).

47-54 is a binding site for ATP; the sequence is GISGGQDS. D53 is a binding site for Mg(2+). R139 provides a ligand contact to deamido-NAD(+). T159 serves as a coordination point for ATP. E164 lines the Mg(2+) pocket. Deamido-NAD(+) contacts are provided by K172 and D179. ATP is bound by residues K188 and T210. 259 to 260 is a binding site for deamido-NAD(+); that stretch reads HK.

This sequence belongs to the NAD synthetase family. Homodimer.

It catalyses the reaction deamido-NAD(+) + NH4(+) + ATP = AMP + diphosphate + NAD(+) + H(+). The protein operates within cofactor biosynthesis; NAD(+) biosynthesis; NAD(+) from deamido-NAD(+) (ammonia route): step 1/1. Catalyzes the ATP-dependent amidation of deamido-NAD to form NAD. Uses ammonia as a nitrogen source. This chain is NH(3)-dependent NAD(+) synthetase, found in Staphylococcus aureus (strain COL).